Reading from the N-terminus, the 273-residue chain is 2,3,4,5-tetrahydropyridine-2,6-dicarboxylate N-succinyltransferase (273 aa).

Substrate-binding residues include arginine 104 and aspartate 141.

It belongs to the transferase hexapeptide repeat family. Homotrimer.

It is found in the cytoplasm. It catalyses the reaction (S)-2,3,4,5-tetrahydrodipicolinate + succinyl-CoA + H2O = (S)-2-succinylamino-6-oxoheptanedioate + CoA. It participates in amino-acid biosynthesis; L-lysine biosynthesis via DAP pathway; LL-2,6-diaminopimelate from (S)-tetrahydrodipicolinate (succinylase route): step 1/3. The protein is 2,3,4,5-tetrahydropyridine-2,6-dicarboxylate N-succinyltransferase of Neisseria meningitidis serogroup A / serotype 4A (strain DSM 15465 / Z2491).